A 378-amino-acid chain; its full sequence is uncharacterized protein (378 aa).

This is an uncharacterized protein from Escherichia coli (strain K12).